The following is a 223-amino-acid chain: Urease accessory protein UreF (223 aa).

Belongs to the UreF family. UreD, UreF and UreG form a complex that acts as a GTP-hydrolysis-dependent molecular chaperone, activating the urease apoprotein by helping to assemble the nickel containing metallocenter of UreC. The UreE protein probably delivers the nickel.

Its subcellular location is the cytoplasm. Functionally, required for maturation of urease via the functional incorporation of the urease nickel metallocenter. The protein is Urease accessory protein UreF of Rhizobium leguminosarum bv. trifolii (strain WSM2304).